Consider the following 175-residue polypeptide: Peptide deformylase 1 (175 aa).

Residues C99 and H141 each coordinate Fe cation. E142 is a catalytic residue. A Fe cation-binding site is contributed by H145.

The protein belongs to the polypeptide deformylase family. The cofactor is Fe(2+).

The enzyme catalyses N-terminal N-formyl-L-methionyl-[peptide] + H2O = N-terminal L-methionyl-[peptide] + formate. Its function is as follows. Removes the formyl group from the N-terminal Met of newly synthesized proteins. Requires at least a dipeptide for an efficient rate of reaction. N-terminal L-methionine is a prerequisite for activity but the enzyme has broad specificity at other positions. This Rickettsia conorii (strain ATCC VR-613 / Malish 7) protein is Peptide deformylase 1.